The sequence spans 330 residues: Cathepsin S (330 aa).

An N-terminal signal peptide occupies residues 1-17; that stretch reads MKQLVCVLFVCSSAVTQ. A propeptide spans 18 to 114 (activation peptide); sequence LHKDPTLDHH…ITYKSNPNQM (97 aa). Residue Asn-104 is glycosylated (N-linked (GlcNAc...) asparagine). Disulfide bonds link Cys-126-Cys-223, Cys-136-Cys-179, Cys-170-Cys-212, and Cys-271-Cys-319. Cys-139 is an active-site residue. Active-site residues include His-277 and Asn-297.

The protein belongs to the peptidase C1 family.

The protein resides in the lysosome. It localises to the secreted. Its subcellular location is the cytoplasmic vesicle. It is found in the phagosome. The catalysed reaction is Similar to cathepsin L, but with much less activity on Z-Phe-Arg-|-NHMec, and more activity on the Z-Val-Val-Arg-|-Xaa compound.. Functionally, thiol protease. Key protease responsible for the removal of the invariant chain from MHC class II molecules and MHC class II antigen presentation. The bond-specificity of this proteinase is in part similar to the specificities of cathepsin L. This is Cathepsin S (CTSS) from Saimiri boliviensis boliviensis (Bolivian squirrel monkey).